The primary structure comprises 328 residues: Sin3 histone deacetylase corepressor complex component SDS3 (328 aa).

Residues 1 to 16 show a composition bias toward low complexity; sequence MSAAGLLAPAPAQAGA. Positions 1-65 are disordered; that stretch reads MSAAGLLAPA…DLAKHDEEDY (65 aa). Ser2 carries the post-translational modification N-acetylserine. The mediates interaction with USP17L2 stretch occupies residues 2 to 170; that stretch reads SAAGLLAPAP…IENEKLTMEL (169 aa). 2 stretches are compositionally biased toward acidic residues: residues 23-37 and 45-54; these read YPEEDEELESAEEDE and SDEDTEDASE. 2 positions are modified to phosphoserine: Ser32 and Ser45. A Phosphothreonine modification is found at Thr49. A Phosphoserine modification is found at Ser53. Basic and acidic residues predominate over residues 56-65; that stretch reads DLAKHDEEDY. The stretch at 66-171 forms a coiled coil; it reads VEMKEQMYQD…ENEKLTMELT (106 aa). Residues Lys69, Lys178, and Lys201 each participate in a glycyl lysine isopeptide (Lys-Gly) (interchain with G-Cter in SUMO2) cross-link. The tract at residues 188 to 226 is sin3 interaction domain (SID); the sequence is RPNDPVPIPDKRRKPAPAQLNYLLTDEQIMEDLRTLNKL. Residues 226–252 are disordered; the sequence is LKSPKRPASPSSPEHLPATPAESPAQR. A phosphoserine mark is found at Ser228, Ser234, and Ser237. Phosphothreonine is present on Thr244.

It belongs to the SDS3 family. As to quaternary structure, interacts with HCFC1. Homodimer. Component of the SIN3 histone deacetylase (HDAC) corepressor complex. Interacts with SIN3A. Interaction with SIN3B enhances the interaction between SIN3B and HDAC1 to form a complex. Component of a mSin3A corepressor complex that contains SIN3A, SAP130, SUDS3/SAP45, ARID4B/SAP180, HDAC1 and HDAC2. Interacts with USP17L2; the interaction is direct. Interacts with FOXK2. Polyubiquitinated. 'Lys-63'-polyubiquitinated SUDS3 positively regulates histone deacetylation. Regulated through deubiquitination by USP17L2/USP17 that cleaves 'Lys-63'-linked ubiquitin chains.

It localises to the nucleus. Functionally, regulatory protein which represses transcription and augments histone deacetylase activity of HDAC1. May have a potential role in tumor suppressor pathways through regulation of apoptosis. May function in the assembly and/or enzymatic activity of the mSin3A corepressor complex or in mediating interactions between the complex and other regulatory complexes. This is Sin3 histone deacetylase corepressor complex component SDS3 (SUDS3) from Pongo abelii (Sumatran orangutan).